A 491-amino-acid chain; its full sequence is Glutamate--tRNA ligase (491 aa).

The 'HIGH' region motif lies at 13–23 (PSPTGFLHIGN). 4 residues coordinate Zn(2+): C110, C112, C137, and H139. The short motif at 254–258 (KLSKR) is the 'KMSKS' region element. K257 lines the ATP pocket.

The protein belongs to the class-I aminoacyl-tRNA synthetase family. Glutamate--tRNA ligase type 1 subfamily. In terms of assembly, monomer. Requires Zn(2+) as cofactor.

The protein resides in the cytoplasm. It carries out the reaction tRNA(Glu) + L-glutamate + ATP = L-glutamyl-tRNA(Glu) + AMP + diphosphate. Its function is as follows. Catalyzes the attachment of glutamate to tRNA(Glu) in a two-step reaction: glutamate is first activated by ATP to form Glu-AMP and then transferred to the acceptor end of tRNA(Glu). The chain is Glutamate--tRNA ligase from Listeria innocua serovar 6a (strain ATCC BAA-680 / CLIP 11262).